Here is a 288-residue protein sequence, read N- to C-terminus: Sulfur carrier protein FdhD (288 aa).

Catalysis depends on cysteine 122, which acts as the Cysteine persulfide intermediate. Position 268–273 (phenylalanine 268–arginine 273) interacts with Mo-bis(molybdopterin guanine dinucleotide).

The protein belongs to the FdhD family.

The protein localises to the cytoplasm. Required for formate dehydrogenase (FDH) activity. Acts as a sulfur carrier protein that transfers sulfur from IscS to the molybdenum cofactor prior to its insertion into FDH. This Anaeromyxobacter sp. (strain K) protein is Sulfur carrier protein FdhD.